A 126-amino-acid chain; its full sequence is RutC family protein y4sK (126 aa).

This sequence belongs to the RutC family.

This is RutC family protein y4sK from Sinorhizobium fredii (strain NBRC 101917 / NGR234).